The sequence spans 482 residues: 2-succinylbenzoate--CoA ligase (482 aa).

The protein belongs to the ATP-dependent AMP-binding enzyme family. MenE subfamily.

The enzyme catalyses 2-succinylbenzoate + ATP + CoA = 2-succinylbenzoyl-CoA + AMP + diphosphate. It functions in the pathway quinol/quinone metabolism; 1,4-dihydroxy-2-naphthoate biosynthesis; 1,4-dihydroxy-2-naphthoate from chorismate: step 5/7. It participates in quinol/quinone metabolism; menaquinone biosynthesis. Its function is as follows. Converts 2-succinylbenzoate (OSB) to 2-succinylbenzoyl-CoA (OSB-CoA). The chain is 2-succinylbenzoate--CoA ligase from Bacillus anthracis (strain A0248).